The following is a 151-amino-acid chain: Large ribosomal subunit protein uL15 (151 aa).

Residues 1 to 60 (MAENNPLKIHNLRPAPGAKTAKTRVGRGEASKGKTAGRGTKGTKARYQVPERFEGGQMPL) form a disordered region.

It belongs to the universal ribosomal protein uL15 family. As to quaternary structure, part of the 50S ribosomal subunit.

Functionally, binds to the 23S rRNA. The protein is Large ribosomal subunit protein uL15 of Streptomyces coelicolor (strain ATCC BAA-471 / A3(2) / M145).